Here is a 181-residue protein sequence, read N- to C-terminus: MSGSAVSKRYASALFDIAVETSQINEIEEELTVLKEVFRNEAGLQEVLSHPKVSAAKKKELIQQSFGALSESVLHTIFLLIDRRRSSIVPDLTDEFIKLANQARQTEDAVVYSVKPLSEAEMLSLSQVFAKKAGIASLRIRNEVQTDLIGGIKVRIGNRIYDGSVSGKLERMERQLAGGNR.

It belongs to the ATPase delta chain family. As to quaternary structure, F-type ATPases have 2 components, F(1) - the catalytic core - and F(0) - the membrane proton channel. F(1) has five subunits: alpha(3), beta(3), gamma(1), delta(1), epsilon(1). F(0) has three main subunits: a(1), b(2) and c(10-14). The alpha and beta chains form an alternating ring which encloses part of the gamma chain. F(1) is attached to F(0) by a central stalk formed by the gamma and epsilon chains, while a peripheral stalk is formed by the delta and b chains.

The protein localises to the cell membrane. Its function is as follows. F(1)F(0) ATP synthase produces ATP from ADP in the presence of a proton or sodium gradient. F-type ATPases consist of two structural domains, F(1) containing the extramembraneous catalytic core and F(0) containing the membrane proton channel, linked together by a central stalk and a peripheral stalk. During catalysis, ATP synthesis in the catalytic domain of F(1) is coupled via a rotary mechanism of the central stalk subunits to proton translocation. This protein is part of the stalk that links CF(0) to CF(1). It either transmits conformational changes from CF(0) to CF(1) or is implicated in proton conduction. This Bacillus velezensis (strain DSM 23117 / BGSC 10A6 / LMG 26770 / FZB42) (Bacillus amyloliquefaciens subsp. plantarum) protein is ATP synthase subunit delta.